A 360-amino-acid polypeptide reads, in one-letter code: MAAERGAGQQQSQEMMEVDRRVESEESGDEEGKKHGGGIVADLSQQSLKDGVERGAEDPEEEHELAVDMETISLDRDAEDVDLNHYRIGKIEGFEVLKKVKSLCLRQNLIKCIENLDELQSLRELDLYDNQIKKIENLEALTELEVLDISFNLLRNIEGIDKLTQLKKLFLVNNKINKIENISTLQQLQMLELGSNRIRAIENIDTLTNLESLFLGKNKITKLQNLDALSNLTVLSMQSNRLTKIEGLQNLVNLRELYLSHNGIEVIEGLENNNKLTMLDIASNRIKKIENISHLTELQEFWMNDNLLESWSDLDELKGARSLETVYLERNPLQKDPQYRRKVMLALPSVRQIDATFVRF.

Residues 1–63 (MAAERGAGQQ…RGAEDPEEEH (63 aa)) form a disordered region. A2 carries the N-acetylalanine modification. 5 positions are modified to phosphoserine: S12, S24, S27, S44, and S47. Over residues 17 to 34 (EVDRRVESEESGDEEGKK) the composition is skewed to basic and acidic residues. LRR repeat units follow at residues 77-98 (DAED…EVLK), 99-120 (KVKS…DELQ), 121-142 (SLRE…EALT), 143-164 (ELEV…DKLT), 165-186 (QLKK…STLQ), 187-208 (QLQM…DTLT), 209-230 (NLES…DALS), 231-252 (NLTV…QNLV), 253-274 (NLRE…ENNN), 275-296 (KLTM…SHLT), and 297-318 (ELQE…DELK). S322 is modified (phosphoserine). The LRRCT domain occupies 331–360 (NPLQKDPQYRRKVMLALPSVRQIDATFVRF).

It belongs to the SDS22 family. As to quaternary structure, interacts with PPP1CA, PPP1CB and PPP1CC/PPP1G.

It localises to the nucleus. Functionally, regulatory subunit of protein phosphatase 1. The sequence is that of Protein phosphatase 1 regulatory subunit 7 (Ppp1r7) from Rattus norvegicus (Rat).